Here is a 620-residue protein sequence, read N- to C-terminus: Cilia- and flagella-associated protein 52 (620 aa).

11 WD repeats span residues 62 to 106 (GHGN…LLAR), 109 to 150 (LHKG…AICG), 156 to 195 (LNVGNATNVIFSRCRDEMFMTAGNGTIRVWELDLPNRKIW), 288 to 327 (QLQGGITSITLRGEGHQFLVGTEESHIYRVSFTDFKETLI), 330 to 369 (CHFDAVEDIVFPFGTAELFATCAKKDIRVWHTSSNRELLR), 372 to 411 (VPNMTCHGIDFMRDGKSIISAWNDGKIRAFAPETGRLMYV), 415 to 454 (AHRIGVTAIATTSDCKRVISGGGEGEVRVWQIGCQTQKLE), 459 to 498 (EHKSSVSCIRVKRNNEECVTASTDGTCIIWDLVRLRRNQM), 500 to 539 (LANTLFQCVCYHPEEFQIITSGTDRKIAYWEVFDGTVIRE), 543 to 582 (SLSGSINGMDITQEGVHFVTGGNDHLVKVWDYNEGEVTHV), and 585 to 620 (GHSGNITRIRISPGNQYIVSVSADGAILRWKYPYTS).

The protein belongs to the CFAP52 family. Microtubule inner protein component of sperm flagellar doublet microtubules. Interacts with BRCA2. Interacts with the CCT chaperonin complex. Interacts with HSP70. Interacts with AK8. Interacts with CFAP45. Interacts with DNAI1. Interacts with IQDC. As to expression, expressed in respiratory cells and sperm (at protein level). Highly expressed in testis. Up-regulated in hepatocellular carcinoma (HCC).

The protein resides in the cytoplasm. It is found in the cytoskeleton. Its subcellular location is the cilium axoneme. The protein localises to the flagellum axoneme. Its function is as follows. Microtubule inner protein (MIP) part of the dynein-decorated doublet microtubules (DMTs) in cilia axoneme. Important for proper ciliary and flagellar beating. May act in cooperation with CFAP45 and axonemal dynein subunit DNAH11. May play a role in cell growth and/or survival. The sequence is that of Cilia- and flagella-associated protein 52 from Homo sapiens (Human).